Here is a 187-residue protein sequence, read N- to C-terminus: dTTP/UTP pyrophosphatase (187 aa).

Residue aspartate 72 is the Proton acceptor of the active site.

It belongs to the Maf family. YhdE subfamily. A divalent metal cation serves as cofactor.

Its subcellular location is the cytoplasm. It carries out the reaction dTTP + H2O = dTMP + diphosphate + H(+). It catalyses the reaction UTP + H2O = UMP + diphosphate + H(+). Its function is as follows. Nucleoside triphosphate pyrophosphatase that hydrolyzes dTTP and UTP. May have a dual role in cell division arrest and in preventing the incorporation of modified nucleotides into cellular nucleic acids. The protein is dTTP/UTP pyrophosphatase of Vibrio cholerae serotype O1 (strain ATCC 39315 / El Tor Inaba N16961).